A 223-amino-acid polypeptide reads, in one-letter code: tRNA (guanine-N(7)-)-methyltransferase (223 aa).

3 residues coordinate S-adenosyl-L-methionine: E45, E70, and D125. The active site involves D125. Substrate-binding positions include K129, D161, and 201 to 204; that span reads TEYE.

It belongs to the class I-like SAM-binding methyltransferase superfamily. TrmB family.

It carries out the reaction guanosine(46) in tRNA + S-adenosyl-L-methionine = N(7)-methylguanosine(46) in tRNA + S-adenosyl-L-homocysteine. It participates in tRNA modification; N(7)-methylguanine-tRNA biosynthesis. Its function is as follows. Catalyzes the formation of N(7)-methylguanine at position 46 (m7G46) in tRNA. The sequence is that of tRNA (guanine-N(7)-)-methyltransferase from Mesoplasma florum (strain ATCC 33453 / NBRC 100688 / NCTC 11704 / L1) (Acholeplasma florum).